Reading from the N-terminus, the 431-residue chain is Adenylosuccinate synthetase (431 aa).

GTP contacts are provided by residues 12–18 (GDEGKGK) and 40–42 (GHT). Asp-13 functions as the Proton acceptor in the catalytic mechanism. Mg(2+)-binding residues include Asp-13 and Gly-40. IMP is bound by residues 13 to 16 (DEGK), 38 to 41 (NAGH), Thr-131, Arg-145, Gln-225, Thr-240, and Arg-304. His-41 functions as the Proton donor in the catalytic mechanism. Residue 300-306 (TVTGRKR) coordinates substrate. GTP-binding positions include Arg-306, 332–334 (KLD), and 414–416 (STS).

The protein belongs to the adenylosuccinate synthetase family. In terms of assembly, homodimer. The cofactor is Mg(2+).

It is found in the cytoplasm. It catalyses the reaction IMP + L-aspartate + GTP = N(6)-(1,2-dicarboxyethyl)-AMP + GDP + phosphate + 2 H(+). It participates in purine metabolism; AMP biosynthesis via de novo pathway; AMP from IMP: step 1/2. Functionally, plays an important role in the de novo pathway of purine nucleotide biosynthesis. Catalyzes the first committed step in the biosynthesis of AMP from IMP. The sequence is that of Adenylosuccinate synthetase from Roseobacter denitrificans (strain ATCC 33942 / OCh 114) (Erythrobacter sp. (strain OCh 114)).